The chain runs to 747 residues: AMP deaminase 1 (747 aa).

T81 is modified (phosphothreonine). Position 85 is a phosphoserine (S85). Y216 carries the post-translational modification Phosphotyrosine. 2 residues coordinate Zn(2+): H303 and H305. Residues H305 and 374-379 (KFNDKY) contribute to the substrate site. Position 441 is a phosphoserine (S441). Position 572 (H572) interacts with Zn(2+). E575 contributes to the substrate binding site. H594 acts as the Proton acceptor in catalysis. D649 is a Zn(2+) binding site. Position 650 to 653 (650 to 653 (DPMQ)) interacts with substrate.

Belongs to the metallo-dependent hydrolases superfamily. Adenosine and AMP deaminases family. As to quaternary structure, homotetramer. The cofactor is Zn(2+).

The enzyme catalyses AMP + H2O + H(+) = IMP + NH4(+). It functions in the pathway purine metabolism; IMP biosynthesis via salvage pathway; IMP from AMP: step 1/1. Its function is as follows. AMP deaminase plays a critical role in energy metabolism. The chain is AMP deaminase 1 from Rattus norvegicus (Rat).